Consider the following 231-residue polypeptide: 2-C-methyl-D-erythritol 4-phosphate cytidylyltransferase (231 aa).

It belongs to the IspD/TarI cytidylyltransferase family. IspD subfamily.

It catalyses the reaction 2-C-methyl-D-erythritol 4-phosphate + CTP + H(+) = 4-CDP-2-C-methyl-D-erythritol + diphosphate. It participates in isoprenoid biosynthesis; isopentenyl diphosphate biosynthesis via DXP pathway; isopentenyl diphosphate from 1-deoxy-D-xylulose 5-phosphate: step 2/6. Its function is as follows. Catalyzes the formation of 4-diphosphocytidyl-2-C-methyl-D-erythritol from CTP and 2-C-methyl-D-erythritol 4-phosphate (MEP). This Dictyoglomus thermophilum (strain ATCC 35947 / DSM 3960 / H-6-12) protein is 2-C-methyl-D-erythritol 4-phosphate cytidylyltransferase.